The sequence spans 301 residues: Probable alpha-L-glutamate ligase (301 aa).

Residues 104–287 (LQLLARKGIG…VATKVIEFIE (184 aa)) form the ATP-grasp domain. Residues K141, 178-179 (EF), D187, and 211-213 (RSN) each bind ATP. Positions 248, 260, and 262 each coordinate Mg(2+). Residues D248, E260, and N262 each coordinate Mn(2+).

This sequence belongs to the RimK family. It depends on Mg(2+) as a cofactor. Requires Mn(2+) as cofactor.

This chain is Probable alpha-L-glutamate ligase, found in Nitrosococcus oceani (strain ATCC 19707 / BCRC 17464 / JCM 30415 / NCIMB 11848 / C-107).